The chain runs to 73 residues: Translation initiation factor IF-1 (73 aa).

Residues 1–72 (MAKEEAIEKD…SKGRIVYRYK (72 aa)) form the S1-like domain.

It belongs to the IF-1 family. As to quaternary structure, component of the 30S ribosomal translation pre-initiation complex which assembles on the 30S ribosome in the order IF-2 and IF-3, IF-1 and N-formylmethionyl-tRNA(fMet); mRNA recruitment can occur at any time during PIC assembly.

The protein localises to the cytoplasm. Functionally, one of the essential components for the initiation of protein synthesis. Stabilizes the binding of IF-2 and IF-3 on the 30S subunit to which N-formylmethionyl-tRNA(fMet) subsequently binds. Helps modulate mRNA selection, yielding the 30S pre-initiation complex (PIC). Upon addition of the 50S ribosomal subunit IF-1, IF-2 and IF-3 are released leaving the mature 70S translation initiation complex. The protein is Translation initiation factor IF-1 of Salinibacter ruber (strain DSM 13855 / M31).